A 158-amino-acid polypeptide reads, in one-letter code: Putative peptidoglycan-binding-like protein (158 aa).

The signal sequence occupies residues 1–24; the sequence is MRSPKVKFLTIFTFCIFITKMSFA.

It belongs to the IagB/IpgF/P19 family.

Its subcellular location is the periplasm. This Escherichia coli (strain K12) protein is Putative peptidoglycan-binding-like protein (pbl).